The chain runs to 342 residues: Protein RecA (342 aa).

65–72 provides a ligand contact to ATP; the sequence is GPESSGKT.

Belongs to the RecA family.

The protein resides in the cytoplasm. Its function is as follows. Can catalyze the hydrolysis of ATP in the presence of single-stranded DNA, the ATP-dependent uptake of single-stranded DNA by duplex DNA, and the ATP-dependent hybridization of homologous single-stranded DNAs. It interacts with LexA causing its activation and leading to its autocatalytic cleavage. The polypeptide is Protein RecA (Caldanaerobacter subterraneus subsp. tengcongensis (strain DSM 15242 / JCM 11007 / NBRC 100824 / MB4) (Thermoanaerobacter tengcongensis)).